We begin with the raw amino-acid sequence, 285 residues long: Methanethiol S-methyltransferase 1 (285 aa).

Helical transmembrane passes span 55–75, 88–108, 132–152, 162–182, and 224–244; these read AYLV…GLVV, AEAV…HSVM, LFAS…PTVI, VTLV…TFII, and FIVA…FAAV.

It belongs to the nurim family.

Its subcellular location is the membrane. The enzyme catalyses methanethiol + S-adenosyl-L-methionine = dimethyl sulfide + S-adenosyl-L-homocysteine + H(+). In terms of biological role, catalyzes the methylation of methanethiol (MeSH) to yield dimethylsulphide (DMS). The polypeptide is Methanethiol S-methyltransferase 1 (Bradyrhizobium diazoefficiens (strain JCM 10833 / BCRC 13528 / IAM 13628 / NBRC 14792 / USDA 110)).